Consider the following 892-residue polypeptide: DNA replication licensing factor mcm6 (892 aa).

2 positions are modified to phosphoserine: serine 96 and serine 98. In terms of domain architecture, MCM spans 426-633; sequence IYSRLTNSLA…VDRHLAKHIV (208 aa). 476-483 lines the ATP pocket; the sequence is GDPSTSKS. An Arginine finger motif is present at residues 608–611; sequence SRFD. The span at 748–758 shows a compositional bias: acidic residues; the sequence is EDDAEAQELEN. Positions 748 to 774 are disordered; that stretch reads EDDAEAQELENDNTNTTNGNDNVSSEE. The segment covering 759–769 has biased composition (low complexity); sequence DNTNTTNGNDN.

It belongs to the MCM family. Component of the mcm2-7 complex. The complex forms a toroidal hexameric ring with the proposed subunit order mcm2-mcm6-mcm4-mcm7-mcm3-mcm5. The heterodimers of mcm4/mcm6 and mcm3/mcm5 interact with mcm2 and mcm7. Interacts with sld3.

The protein resides in the nucleus. It catalyses the reaction ATP + H2O = ADP + phosphate + H(+). In terms of biological role, acts as a component of the mcm2-7 complex (mcm complex) which is the putative replicative helicase essential for 'once per cell cycle' DNA replication initiation and elongation in eukaryotic cells. The active ATPase sites in the mcm2-7 ring are formed through the interaction surfaces of two neighboring subunits such that a critical structure of a conserved arginine finger motif is provided in trans relative to the ATP-binding site of the Walker A box of the adjacent subunit. The six ATPase active sites, however, are likely to contribute differentially to the complex helicase activity. This Schizosaccharomyces pombe (strain 972 / ATCC 24843) (Fission yeast) protein is DNA replication licensing factor mcm6 (mcm6).